We begin with the raw amino-acid sequence, 310 residues long: 4-hydroxythreonine-4-phosphate dehydrogenase (310 aa).

His126 and Thr127 together coordinate substrate. A divalent metal cation contacts are provided by His156, His195, and His251. Residues Lys259, Asn268, and Arg277 each contribute to the substrate site.

Belongs to the PdxA family. Homodimer. Zn(2+) serves as cofactor. Mg(2+) is required as a cofactor. Requires Co(2+) as cofactor.

It is found in the cytoplasm. It catalyses the reaction 4-(phosphooxy)-L-threonine + NAD(+) = 3-amino-2-oxopropyl phosphate + CO2 + NADH. It participates in cofactor biosynthesis; pyridoxine 5'-phosphate biosynthesis; pyridoxine 5'-phosphate from D-erythrose 4-phosphate: step 4/5. Functionally, catalyzes the NAD(P)-dependent oxidation of 4-(phosphooxy)-L-threonine (HTP) into 2-amino-3-oxo-4-(phosphooxy)butyric acid which spontaneously decarboxylates to form 3-amino-2-oxopropyl phosphate (AHAP). The chain is 4-hydroxythreonine-4-phosphate dehydrogenase from Helicobacter acinonychis (strain Sheeba).